Here is a 597-residue protein sequence, read N- to C-terminus: Dictomallein-3 (597 aa).

The signal sequence occupies residues 1 to 19 (MKLILILIFLFSCILFINC). The Peptidase M66 domain maps to 148-409 (PDVGQDYTLK…QNYFKNSIYY (262 aa)). His301 is a binding site for Zn(2+). Residue Glu302 is part of the active site. His305 and His311 together coordinate Zn(2+).

This sequence belongs to the dictomallein family. Zn(2+) is required as a cofactor.

Its subcellular location is the secreted. The protein is Dictomallein-3 (dtmlC) of Dictyostelium discoideum (Social amoeba).